The following is a 147-amino-acid chain: UPF0306 protein YPK_3704 (147 aa).

It belongs to the UPF0306 family.

This Yersinia pseudotuberculosis serotype O:3 (strain YPIII) protein is UPF0306 protein YPK_3704.